The following is a 521-amino-acid chain: Cholesterol side-chain cleavage enzyme, mitochondrial (521 aa).

The N-terminal 39 residues, 1–39 (MLAKGLPPRSVLVKGCQTFLSAPREGLGRLRVPTGEGAG), are a transit peptide targeting the mitochondrion. Position 462 (cysteine 462) interacts with heme.

It belongs to the cytochrome P450 family. Interacts with FDX1/adrenodoxin. The cofactor is heme.

The protein resides in the mitochondrion inner membrane. It catalyses the reaction 6 reduced [adrenodoxin] + cholesterol + 3 O2 + 6 H(+) = 4-methylpentanal + pregnenolone + 6 oxidized [adrenodoxin] + 4 H2O. It carries out the reaction 2 reduced [adrenodoxin] + cholesterol + O2 + 2 H(+) = (22R)-hydroxycholesterol + 2 oxidized [adrenodoxin] + H2O. The catalysed reaction is (22R)-hydroxycholesterol + 2 reduced [adrenodoxin] + O2 + 2 H(+) = (20R,22R)-20,22-dihydroxycholesterol + 2 oxidized [adrenodoxin] + H2O. The enzyme catalyses (20R,22R)-20,22-dihydroxycholesterol + 2 reduced [adrenodoxin] + O2 + 2 H(+) = 4-methylpentanal + pregnenolone + 2 oxidized [adrenodoxin] + 2 H2O. It participates in lipid metabolism; C21-steroid hormone metabolism. The protein operates within steroid metabolism; cholesterol metabolism. A cytochrome P450 monooxygenase that catalyzes the side-chain hydroxylation and cleavage of cholesterol to pregnenolone, the precursor of most steroid hormones. Catalyzes three sequential oxidation reactions of cholesterol, namely the hydroxylation at C22 followed with the hydroxylation at C20 to yield 20R,22R-hydroxycholesterol that is further cleaved between C20 and C22 to yield the C21-steroid pregnenolone and 4-methylpentanal. Mechanistically, uses molecular oxygen inserting one oxygen atom into a substrate and reducing the second into a water molecule. Two electrons are provided by NADPH via a two-protein mitochondrial transfer system comprising flavoprotein FDXR (adrenodoxin/ferredoxin reductase) and nonheme iron-sulfur protein FDX1 or FDX2 (adrenodoxin/ferredoxin). This Homo sapiens (Human) protein is Cholesterol side-chain cleavage enzyme, mitochondrial.